The following is a 488-amino-acid chain: Probable glycine dehydrogenase (decarboxylating) subunit 2 (488 aa).

Lys274 carries the N6-(pyridoxal phosphate)lysine modification.

It belongs to the GcvP family. C-terminal subunit subfamily. As to quaternary structure, the glycine cleavage system is composed of four proteins: P, T, L and H. In this organism, the P 'protein' is a heterodimer of two subunits. Requires pyridoxal 5'-phosphate as cofactor.

It carries out the reaction N(6)-[(R)-lipoyl]-L-lysyl-[glycine-cleavage complex H protein] + glycine + H(+) = N(6)-[(R)-S(8)-aminomethyldihydrolipoyl]-L-lysyl-[glycine-cleavage complex H protein] + CO2. Functionally, the glycine cleavage system catalyzes the degradation of glycine. The P protein binds the alpha-amino group of glycine through its pyridoxal phosphate cofactor; CO(2) is released and the remaining methylamine moiety is then transferred to the lipoamide cofactor of the H protein. The protein is Probable glycine dehydrogenase (decarboxylating) subunit 2 of Listeria innocua serovar 6a (strain ATCC BAA-680 / CLIP 11262).